A 176-amino-acid polypeptide reads, in one-letter code: Oligoribonuclease (176 aa).

In terms of domain architecture, Exonuclease spans 2–159; the sequence is EMTGLNPETD…DDILESIEEM (158 aa). Residue Tyr117 is part of the active site.

Belongs to the oligoribonuclease family.

Its subcellular location is the cytoplasm. 3'-to-5' exoribonuclease specific for small oligoribonucleotides. This is Oligoribonuclease from Neisseria gonorrhoeae (strain ATCC 700825 / FA 1090).